The following is a 166-amino-acid chain: Small ribosomal subunit protein uS5 (166 aa).

The S5 DRBM domain maps to Leu-11–Val-74.

The protein belongs to the universal ribosomal protein uS5 family. Part of the 30S ribosomal subunit. Contacts proteins S4 and S8.

With S4 and S12 plays an important role in translational accuracy. In terms of biological role, located at the back of the 30S subunit body where it stabilizes the conformation of the head with respect to the body. In Enterobacter sp. (strain 638), this protein is Small ribosomal subunit protein uS5.